The primary structure comprises 164 residues: SsrA-binding protein (164 aa).

Belongs to the SmpB family.

It is found in the cytoplasm. Required for rescue of stalled ribosomes mediated by trans-translation. Binds to transfer-messenger RNA (tmRNA), required for stable association of tmRNA with ribosomes. tmRNA and SmpB together mimic tRNA shape, replacing the anticodon stem-loop with SmpB. tmRNA is encoded by the ssrA gene; the 2 termini fold to resemble tRNA(Ala) and it encodes a 'tag peptide', a short internal open reading frame. During trans-translation Ala-aminoacylated tmRNA acts like a tRNA, entering the A-site of stalled ribosomes, displacing the stalled mRNA. The ribosome then switches to translate the ORF on the tmRNA; the nascent peptide is terminated with the 'tag peptide' encoded by the tmRNA and targeted for degradation. The ribosome is freed to recommence translation, which seems to be the essential function of trans-translation. This is SsrA-binding protein from Corynebacterium efficiens (strain DSM 44549 / YS-314 / AJ 12310 / JCM 11189 / NBRC 100395).